Reading from the N-terminus, the 390-residue chain is Coenzyme A biosynthesis bifunctional protein CoaBC (390 aa).

The interval 1–188 (MDKNKHILIG…NQKDYLKNKK (188 aa)) is phosphopantothenoylcysteine decarboxylase. Cysteine 156 acts as the Proton donor in catalysis. The segment at 189–390 (ILITASRTEE…VAKEILKILY (202 aa)) is phosphopantothenate--cysteine ligase. CTP-binding positions include aspartate 277, lysine 287, 304-307 (PDII), phenylalanine 323, lysine 338, and lysine 342.

The protein in the N-terminal section; belongs to the HFCD (homo-oligomeric flavin containing Cys decarboxylase) superfamily. It in the C-terminal section; belongs to the PPC synthetase family. Mg(2+) serves as cofactor. Requires FMN as cofactor.

It catalyses the reaction N-[(R)-4-phosphopantothenoyl]-L-cysteine + H(+) = (R)-4'-phosphopantetheine + CO2. It carries out the reaction (R)-4'-phosphopantothenate + L-cysteine + CTP = N-[(R)-4-phosphopantothenoyl]-L-cysteine + CMP + diphosphate + H(+). It participates in cofactor biosynthesis; coenzyme A biosynthesis; CoA from (R)-pantothenate: step 2/5. Its pathway is cofactor biosynthesis; coenzyme A biosynthesis; CoA from (R)-pantothenate: step 3/5. In terms of biological role, catalyzes two sequential steps in the biosynthesis of coenzyme A. In the first step cysteine is conjugated to 4'-phosphopantothenate to form 4-phosphopantothenoylcysteine. In the second step the latter compound is decarboxylated to form 4'-phosphopantotheine. The chain is Coenzyme A biosynthesis bifunctional protein CoaBC from Borreliella burgdorferi (strain ATCC 35210 / DSM 4680 / CIP 102532 / B31) (Borrelia burgdorferi).